A 142-amino-acid polypeptide reads, in one-letter code: Large ribosomal subunit protein uL16 (142 aa).

The protein belongs to the universal ribosomal protein uL16 family. In terms of assembly, part of the 50S ribosomal subunit.

Its function is as follows. Binds 23S rRNA and is also seen to make contacts with the A and possibly P site tRNAs. The sequence is that of Large ribosomal subunit protein uL16 from Fervidobacterium nodosum (strain ATCC 35602 / DSM 5306 / Rt17-B1).